A 78-amino-acid chain; its full sequence is MSEVVIKEQLEQYISKIERLEQEKADLSQEVKDIFQDASSHGFDVKAMKSILKLKKLDKDKLAEQDAMLELYRDTLGI.

This sequence belongs to the UPF0335 family.

This is UPF0335 protein RrIowa_0193 from Rickettsia rickettsii (strain Iowa).